We begin with the raw amino-acid sequence, 471 residues long: Glutamate--tRNA ligase (471 aa).

The 'HIGH' region motif lies at 9–19; the sequence is PSPTGYLHVGG. Residues C98, C100, C125, and H127 each contribute to the Zn(2+) site. The 'KMSKS' region motif lies at 237–241; the sequence is KLSKR. K240 contacts ATP.

It belongs to the class-I aminoacyl-tRNA synthetase family. Glutamate--tRNA ligase type 1 subfamily. As to quaternary structure, monomer. Zn(2+) is required as a cofactor.

The protein localises to the cytoplasm. The enzyme catalyses tRNA(Glu) + L-glutamate + ATP = L-glutamyl-tRNA(Glu) + AMP + diphosphate. Functionally, catalyzes the attachment of glutamate to tRNA(Glu) in a two-step reaction: glutamate is first activated by ATP to form Glu-AMP and then transferred to the acceptor end of tRNA(Glu). The chain is Glutamate--tRNA ligase from Escherichia coli O9:H4 (strain HS).